The following is a 306-amino-acid chain: UDP-3-O-acyl-N-acetylglucosamine deacetylase (306 aa).

Zn(2+)-binding residues include histidine 79, histidine 239, and aspartate 243. The Proton donor role is filled by histidine 266.

This sequence belongs to the LpxC family. The cofactor is Zn(2+).

It carries out the reaction a UDP-3-O-[(3R)-3-hydroxyacyl]-N-acetyl-alpha-D-glucosamine + H2O = a UDP-3-O-[(3R)-3-hydroxyacyl]-alpha-D-glucosamine + acetate. It participates in glycolipid biosynthesis; lipid IV(A) biosynthesis; lipid IV(A) from (3R)-3-hydroxytetradecanoyl-[acyl-carrier-protein] and UDP-N-acetyl-alpha-D-glucosamine: step 2/6. Its function is as follows. Catalyzes the hydrolysis of UDP-3-O-myristoyl-N-acetylglucosamine to form UDP-3-O-myristoylglucosamine and acetate, the committed step in lipid A biosynthesis. This chain is UDP-3-O-acyl-N-acetylglucosamine deacetylase, found in Actinobacillus pleuropneumoniae serotype 7 (strain AP76).